A 330-amino-acid chain; its full sequence is Ribose-phosphate pyrophosphokinase (330 aa).

ATP is bound by residues 40-42 (DGE) and 99-100 (RQ). H133 and D174 together coordinate Mg(2+). K197 is an active-site residue. Residues R199, D223, and 227–231 (DTGGT) contribute to the D-ribose 5-phosphate site.

Belongs to the ribose-phosphate pyrophosphokinase family. Class I subfamily. Homohexamer. The cofactor is Mg(2+).

It is found in the cytoplasm. It carries out the reaction D-ribose 5-phosphate + ATP = 5-phospho-alpha-D-ribose 1-diphosphate + AMP + H(+). It functions in the pathway metabolic intermediate biosynthesis; 5-phospho-alpha-D-ribose 1-diphosphate biosynthesis; 5-phospho-alpha-D-ribose 1-diphosphate from D-ribose 5-phosphate (route I): step 1/1. Its function is as follows. Involved in the biosynthesis of the central metabolite phospho-alpha-D-ribosyl-1-pyrophosphate (PRPP) via the transfer of pyrophosphoryl group from ATP to 1-hydroxyl of ribose-5-phosphate (Rib-5-P). This is Ribose-phosphate pyrophosphokinase from Ureaplasma parvum serovar 3 (strain ATCC 700970).